We begin with the raw amino-acid sequence, 199 residues long: 3-isopropylmalate dehydratase small subunit (199 aa).

It belongs to the LeuD family. LeuD type 1 subfamily. In terms of assembly, heterodimer of LeuC and LeuD.

The catalysed reaction is (2R,3S)-3-isopropylmalate = (2S)-2-isopropylmalate. It functions in the pathway amino-acid biosynthesis; L-leucine biosynthesis; L-leucine from 3-methyl-2-oxobutanoate: step 2/4. Functionally, catalyzes the isomerization between 2-isopropylmalate and 3-isopropylmalate, via the formation of 2-isopropylmaleate. This chain is 3-isopropylmalate dehydratase small subunit, found in Mycobacteroides abscessus (strain ATCC 19977 / DSM 44196 / CCUG 20993 / CIP 104536 / JCM 13569 / NCTC 13031 / TMC 1543 / L948) (Mycobacterium abscessus).